The primary structure comprises 475 residues: MKYEAVIGLEVHAELLTDSKIFCGCSTKFGSEPNTQVCPVCLGLPGTLPVLNKKVVEYAVRAGLALNCTIANFSKMDRKNYFYPDLPKAYQISQYDLPLCSNGYIEIEVEGGTKRIGIKRIHIEEDAGKLLHEGTDGSLVDYNRAGVPLIEIVSEPDISTPEEAYQYLVKLKSILEYTEVSDCKMQEGSLRVDTNVSVRPVGTTELGTKIELKNLNSFKAVQKALEYEIKRQIKVLEEGGTIVQETRRWNEAKGITEPMRTKEEAHDYRYFPEPDLVPIIVTEEWKEEIRKTLPEMPDAKRERFITQYGLPEYDAKVITSSKKMADFFEKCASNYHSPKIVSNWLMGEFARLLNDTGKEIDEVPITPDMLIELLKLVDDNVISGSIAKTVFEEMFFTGKNPQIIVEEKGLRQIADEGELRRIVRKVIEENPKSVEDYKKGKEKALGFLVGQVMKETKGKANPQLTNQLLREELSK.

This sequence belongs to the GatB/GatE family. GatB subfamily. As to quaternary structure, heterotrimer of A, B and C subunits.

It carries out the reaction L-glutamyl-tRNA(Gln) + L-glutamine + ATP + H2O = L-glutaminyl-tRNA(Gln) + L-glutamate + ADP + phosphate + H(+). It catalyses the reaction L-aspartyl-tRNA(Asn) + L-glutamine + ATP + H2O = L-asparaginyl-tRNA(Asn) + L-glutamate + ADP + phosphate + 2 H(+). Functionally, allows the formation of correctly charged Asn-tRNA(Asn) or Gln-tRNA(Gln) through the transamidation of misacylated Asp-tRNA(Asn) or Glu-tRNA(Gln) in organisms which lack either or both of asparaginyl-tRNA or glutaminyl-tRNA synthetases. The reaction takes place in the presence of glutamine and ATP through an activated phospho-Asp-tRNA(Asn) or phospho-Glu-tRNA(Gln). In Caldanaerobacter subterraneus subsp. tengcongensis (strain DSM 15242 / JCM 11007 / NBRC 100824 / MB4) (Thermoanaerobacter tengcongensis), this protein is Aspartyl/glutamyl-tRNA(Asn/Gln) amidotransferase subunit B.